The primary structure comprises 313 residues: Protein FixB (313 aa).

Position 255–283 (255–283 (LYLAVGISGQIQHMVGANGAQTIFAINKD)) interacts with FAD.

It belongs to the ETF alpha-subunit/FixB family. As to quaternary structure, heterodimer of FixA and FixB.

It functions in the pathway amine and polyamine metabolism; carnitine metabolism. Functionally, required for anaerobic carnitine reduction. May bring reductant to CaiA. The protein is Protein FixB of Salmonella agona (strain SL483).